The primary structure comprises 409 residues: Sperm equatorial segment protein 1 (409 aa).

The signal sequence occupies residues 1–18 (MKPVVLVALLWLWPSSFL). The N-linked (GlcNAc...) asparagine glycan is linked to asparagine 132. Residues 141–223 (EPYIEKEPEP…TTNTQGTPNT (83 aa)) form a disordered region. The span at 167 to 177 (PEPEPESESAP) shows a compositional bias: acidic residues. The span at 198–208 (NKVRTGTSRMS) shows a compositional bias: polar residues. A compositionally biased stretch (low complexity) spans 209 to 223 (TVITQTTNTQGTPNT).

This sequence belongs to the SPESP1 family. In terms of processing, glycosylated. In testis there are two predominant forms of 77- and 67-kDa and a form of 47-kDa, whereas in epididymal sperm from caput, corpus, and cauda there are two forms of 47- and 43-kDa. Testis forms contain complex carbohydrate residues. Epididymal sperm forms are N-glycosylated. Then undergoes significant glycosylation in the testis and that the majority of these glycoconjugates are removed by the time sperm reach the caput epididymis.

It localises to the cytoplasmic vesicle. The protein resides in the secretory vesicle. Its subcellular location is the acrosome. Its function is as follows. Involved in fertilization ability of sperm. The sequence is that of Sperm equatorial segment protein 1 from Rattus norvegicus (Rat).